A 392-amino-acid chain; its full sequence is MEAPLVSLDEEFEDIRPSCTEEPEEKPQCLYGTSPHHLEDPSLSELENFSSEIISFKSMEDLVNEFDEKLNVCFRNYNAKTESLAPVKNQLQIQEEEETLRDEEVWDALTDNYIPSLSEDWRDPNIEALNGNSSDIEIHEKEEEEFNEKSENDSGINEEPLLTADQVIEEIEEMMQNSPDPEEEEEVLEEEDGGEISSQADSVLLQEMQALTQTFNNNWSYEGLRHMSGSELTELLDRVEGAIRDFSEELVHQLARRDELEFEKEVKNSFITVLIEVQNKQREQRELMKKRRKEKGLSLQSNRIEKGSQMPLKRFSMEGISNILQSGIRQTFGSSGADRQYLNTVIPYEKKSSPPSVEDLQMLTNILFAMKEDNEKVPTLLTDYILKVLCPT.

Residues 1–36 form a disordered region; sequence MEAPLVSLDEEFEDIRPSCTEEPEEKPQCLYGTSPH. Serine 58 carries the phosphoserine modification. A disordered region spans residues 175-196; the sequence is MQNSPDPEEEEEVLEEEDGGEI. Over residues 180-194 the composition is skewed to acidic residues; sequence DPEEEEEVLEEEDGG. Positions 230 to 298 form a coiled coil; the sequence is SELTELLDRV…KKRRKEKGLS (69 aa). Serine 298 and serine 316 each carry phosphoserine.

It belongs to the zygin family. As to quaternary structure, homodimer. Interacts with the NH2-terminal variable region (V1) of PKC zeta and weakly with that of PKC epsilon. Interacts with UBE4B and SAP30L. Interacts with SCOC and ULK1; SCOC interferes with ULK1-binding to FEZ1. Directly interacts with SCOC and UVRAG. Stabilizes the interaction between SCOC and UVRAG during amino acid starvation. Phosphorylated by protein kinase C zeta; which enhances interaction with UBE4B and polyubiquitination. Post-translationally, polyubiquitinated in a UBE4B-dependent manner; which does not lead to proteasomal degradation and may be important for neurogenic activity. Polyubiquitin linkage seems to be mainly through Lys-26.

It is found in the cytoplasm. Its subcellular location is the cytoskeleton. The protein localises to the microtubule organizing center. The protein resides in the centrosome. It localises to the cell membrane. Its function is as follows. May be involved in axonal outgrowth as component of the network of molecules that regulate cellular morphology and axon guidance machinery. May participate in the transport of mitochondria and other cargos along microtubules. The protein is Fasciculation and elongation protein zeta-1 (Fez1) of Mus musculus (Mouse).